The chain runs to 315 residues: HTH-type transcriptional regulator TreR (315 aa).

Residues 5–59 enclose the HTH lacI-type domain; the sequence is LTIKDIARLSGVGKSTVSRVLNNESGVSERTRERVEAVMNQHGFSPSRSARAMRG. The segment at residues 7-26 is a DNA-binding region (H-T-H motif); it reads IKDIARLSGVGKSTVSRVLN. Alpha,alpha-trehalose 6-phosphate is bound by residues 71-77, glycine 126, arginine 147, 187-190, arginine 194, threonine 242, and tyrosine 284; these read RLDSLSE and DITT.

As to quaternary structure, homodimer.

In terms of biological role, repressor of the treBC operon. It is able to bind trehalose-6-phosphate. The sequence is that of HTH-type transcriptional regulator TreR (treR) from Salmonella typhimurium (strain LT2 / SGSC1412 / ATCC 700720).